The sequence spans 251 residues: Ell1-associated factor 1 (251 aa).

2 disordered regions span residues 110 to 187 (SKTV…DMEV) and 201 to 251 (FDQE…EDED). The segment covering 112–123 (TVPSNAITQSDN) has biased composition (polar residues). The span at 124 to 135 (SQISESKSTSQS) shows a compositional bias: low complexity. A compositionally biased stretch (basic and acidic residues) spans 143–157 (RRKEKELEASKDGKI). Polar residues-rich tracts occupy residues 204-220 (EFNS…TASK) and 236-251 (SSAQ…EDED). Residue Ser247 is modified to Phosphoserine.

It belongs to the EAF family. Forms a stable heterodimer with ell1. Ell1-eaf1 complex interacts with RNA polymerase II.

It localises to the nucleus. Activates transcription elongation by RNA polymerase II and pyrophosphorolysis as a complex with ell1. Acts as a transcriptional transactivator of ell1 elongation activities. The polypeptide is Ell1-associated factor 1 (eaf1) (Schizosaccharomyces pombe (strain 972 / ATCC 24843) (Fission yeast)).